The chain runs to 79 residues: uncharacterized protein (79 aa).

It is found in the mitochondrion. This is an uncharacterized protein from Oenothera berteroana (Bertero's evening primrose).